The primary structure comprises 207 residues: Phosphoserine phosphatase (207 aa).

Residue aspartate 8 is the Nucleophile of the active site. 2 residues coordinate Mg(2+): aspartate 8 and aspartate 10. Aspartate 10 serves as the catalytic Proton donor. Residues glutamate 17, arginine 53, 96–97 (SG), and lysine 141 each bind substrate. Residue aspartate 164 participates in Mg(2+) binding. Substrate is bound at residue asparagine 167.

The protein belongs to the HAD-like hydrolase superfamily. SerB family. The cofactor is Mg(2+).

It carries out the reaction O-phospho-L-serine + H2O = L-serine + phosphate. The enzyme catalyses O-phospho-D-serine + H2O = D-serine + phosphate. Its pathway is amino-acid biosynthesis; L-serine biosynthesis; L-serine from 3-phospho-D-glycerate: step 3/3. The chain is Phosphoserine phosphatase from Campylobacter jejuni subsp. doylei (strain ATCC BAA-1458 / RM4099 / 269.97).